The primary structure comprises 87 residues: MANTASAKKMVRKIKRRTLVNKMRMSRIRTFVRKVRKAIAVGPKSAAAEALRVAQPEIHRGVTKGVLHKNRAARIVSRLSGHIKKMA.

The protein belongs to the bacterial ribosomal protein bS20 family.

Functionally, binds directly to 16S ribosomal RNA. In Neorickettsia sennetsu (strain ATCC VR-367 / Miyayama) (Ehrlichia sennetsu), this protein is Small ribosomal subunit protein bS20.